The following is a 345-amino-acid chain: Anthranilate phosphoribosyltransferase (345 aa).

Residues glycine 84, 87-88 (GD), threonine 92, 94-97 (NIST), 112-120 (KHGGRGVSS), and serine 124 contribute to the 5-phospho-alpha-D-ribose 1-diphosphate site. Glycine 84 lines the anthranilate pocket. Mg(2+) is bound at residue serine 96. Position 170 (arginine 170) interacts with anthranilate. Mg(2+) contacts are provided by aspartate 229 and glutamate 230.

This sequence belongs to the anthranilate phosphoribosyltransferase family. Homodimer. Mg(2+) is required as a cofactor.

It catalyses the reaction N-(5-phospho-beta-D-ribosyl)anthranilate + diphosphate = 5-phospho-alpha-D-ribose 1-diphosphate + anthranilate. It participates in amino-acid biosynthesis; L-tryptophan biosynthesis; L-tryptophan from chorismate: step 2/5. In terms of biological role, catalyzes the transfer of the phosphoribosyl group of 5-phosphorylribose-1-pyrophosphate (PRPP) to anthranilate to yield N-(5'-phosphoribosyl)-anthranilate (PRA). The protein is Anthranilate phosphoribosyltransferase of Paracidovorax citrulli (strain AAC00-1) (Acidovorax citrulli).